The following is a 1985-amino-acid chain: Histone-lysine N-methyltransferase SETD1B (1985 aa).

Residues 1–11 (MENSHPHHHHQ) are compositionally biased toward basic residues. Residues 1–25 (MENSHPHHHHQQPPPQPGPSGERRN) form a disordered region. Positions 67–97 (VEDPRVVGIWTKNKELELSVPKFKIDEFYVG) are interaction with WDR82. The region spanning 92-180 (DEFYVGPVPP…NIIHVELDTK (89 aa)) is the RRM domain. Disordered regions lie at residues 234–304 (GCGS…QDPT), 353–710 (GSSG…PPPA), 955–1480 (VKRK…RTGP), 1519–1624 (QLPP…STKL), and 1658–1687 (RGPWRRPPKKRHEDLVAPSASPEPSPPQPL). Composition is skewed to polar residues over residues 242–258 (VTPNSGGTPFSQDTAYS), 264–273 (TPNSYGQGTP), 281–304 (PFSQDSSYSSRQPTPSYLFSQDPT), and 353–365 (GSSGTPFKAQSQD). Residues 366–381 (ATTFAHTPPPAQTATA) are compositionally biased toward low complexity. Pro residues-rich tracts occupy residues 393–404 (TPAPPFPPPPEE), 423–433 (PAPPPLPPAEP), and 440–449 (GTPPGPPPPD). The segment covering 484–512 (EKPHDSLDSRIEMLLKEQRTKLPFLREQD) has biased composition (basic and acidic residues). Low complexity predominate over residues 522 to 535 (SPISSSSSQLSPLS). The segment covering 583–594 (PRPPPEPGPPDP) has biased composition (pro residues). A compositionally biased stretch (acidic residues) spans 628–637 (EDMEISDDEM). Residues 650–669 (PMVVTPGAGAVAAPNVLAPN) show a composition bias toward low complexity. A compositionally biased stretch (pro residues) spans 670–710 (LPLPPPPGFPPLPPPPPPPPPQPGFPMPPPLPPPPPPPPPA). Phosphoserine occurs at positions 977 and 985. A compositionally biased stretch (basic and acidic residues) spans 986–1006 (ERERDRDIADAPCELTKRDPK). Residue serine 1022 is modified to Phosphoserine. Positions 1032-1055 (LSASSSSSASSSSGSSTTSPSSSA) are enriched in low complexity. Residues 1058-1083 (KEEEDRESTEEEEEEEEEEAEEEEEE) show a composition bias toward acidic residues. Residues 1087 to 1097 (SRISSPSSSSS) are compositionally biased toward low complexity. The span at 1100–1120 (KDDEDDNEADSDGQIDSDIDD) shows a compositional bias: acidic residues. Low complexity predominate over residues 1143 to 1178 (SITTSKAPAESSSSSSESSGSSEFESSSESESSSSS). Residues 1179–1202 (SEDEEEMTVPGVEEEEEEEEEEEK) are compositionally biased toward acidic residues. The span at 1205-1217 (AMAAATVVAMAEE) shows a compositional bias: low complexity. Over residues 1247–1261 (GTEEEVDIEAEDEVP) the composition is skewed to acidic residues. 3 positions are modified to phosphoserine: serine 1283, serine 1301, and serine 1354. Residues 1331–1373 (EPPPMLSLPLQPPLPPPRLLRPPSPPPEPETPEPPKPPVPLEP) show a composition bias toward pro residues. Residues 1402-1442 (PGGEPPLSGSSSGLSLSSPQVPGSPFSYPSPSPGLSSGGLP) are compositionally biased toward low complexity. Residues 1535–1544 (IKRKPGRPRR) show a composition bias toward basic residues. Pro residues-rich tracts occupy residues 1600 to 1619 (PAPPPPLPPQPPPPPPPPPV) and 1678 to 1687 (SPEPSPPQPL). Phosphoserine is present on residues serine 1678 and serine 1682. The WDR5 interaction motif (WIN) signature appears at 1764–1769 (GCARSE). Positions 1786–1819 (SRASTDEPPMDTQGMSIPAQPHASTRAGSERRSE) are disordered. Positions 1817–1822 (RSEQRR) match the RxxxRR motif motif. In terms of domain architecture, SET spans 1846 to 1963 (KKLKFCKSHI…VNEEITYDYK (118 aa)). Tyrosine 1962 lines the S-adenosyl-L-methionine pocket. Residues 1969–1985 (VKIPCLCGSENCRGTLN) form the Post-SET domain.

The protein belongs to the class V-like SAM-binding methyltransferase superfamily. Component of the SET1B/COMPASS complex composed of the catalytic subunit SETD1B, WDR5, WDR82, RBBP5, ASH2L/ASH2, CXXC1/CFP1, HCFC1, DPY30 homotrimer and BOD1. Forms a core complex with the evolutionary conserved subcomplex WRAD composed of WDR5, RBBP5, ASH2L/ASH2 and DPY30 subunits; WRAD differentially stimulates the methyltransferase activity. Interacts with HCFC1 and ASH2L/ASH2. Interacts (via the RRM domain) with WDR82. Interacts (via the RRM domain) with hyperphosphorylated C-terminal domain (CTD) of RNA polymerase II large subunit (POLR2A) only in the presence of WDR82. Binds specifically to CTD heptad repeats phosphorylated on 'Ser-5' of each heptad. Interacts with RBM15. Interacts (via WIN motif) with WDR5. In terms of tissue distribution, widely expressed.

Its subcellular location is the nucleus. The protein resides in the nucleus speckle. The protein localises to the chromosome. It localises to the cytoplasm. It carries out the reaction L-lysyl(4)-[histone H3] + S-adenosyl-L-methionine = N(6)-methyl-L-lysyl(4)-[histone H3] + S-adenosyl-L-homocysteine + H(+). The catalysed reaction is N(6)-methyl-L-lysyl(4)-[histone H3] + S-adenosyl-L-methionine = N(6),N(6)-dimethyl-L-lysyl(4)-[histone H3] + S-adenosyl-L-homocysteine + H(+). It catalyses the reaction N(6),N(6)-dimethyl-L-lysyl(4)-[histone H3] + S-adenosyl-L-methionine = N(6),N(6),N(6)-trimethyl-L-lysyl(4)-[histone H3] + S-adenosyl-L-homocysteine + H(+). Functionally, histone methyltransferase that catalyzes methyl group transfer from S-adenosyl-L-methionine to the epsilon-amino group of 'Lys-4' of histone H3 (H3K4) via a non-processive mechanism. Part of chromatin remodeling machinery, forms H3K4me1, H3K4me2 and H3K4me3 methylation marks at active chromatin sites where transcription and DNA repair take place. Plays an essential role in regulating the transcriptional programming of multipotent hematopoietic progenitor cells and lymphoid lineage specification during hematopoiesis. The protein is Histone-lysine N-methyltransferase SETD1B (Setd1b) of Mus musculus (Mouse).